A 244-amino-acid chain; its full sequence is Small ribosomal subunit protein uS2 (244 aa).

A disordered region spans residues 224 to 244 (GQQGSDEAEEAEEAAEEVVAE). The segment covering 229-244 (DEAEEAEEAAEEVVAE) has biased composition (acidic residues).

Belongs to the universal ribosomal protein uS2 family.

In Desulfitobacterium hafniense (strain DSM 10664 / DCB-2), this protein is Small ribosomal subunit protein uS2.